The primary structure comprises 497 residues: Aldehyde dehydrogenase (497 aa).

242–247 (GSTLVG) serves as a coordination point for NAD(+). The active-site Proton acceptor is the Glu-265. Catalysis depends on Cys-299, which acts as the Nucleophile.

The protein belongs to the aldehyde dehydrogenase family.

The enzyme catalyses an aldehyde + NAD(+) + H2O = a carboxylate + NADH + 2 H(+). Its pathway is alcohol metabolism; ethanol degradation; acetate from ethanol: step 2/2. In Aspergillus niger, this protein is Aldehyde dehydrogenase (aldA).